The sequence spans 461 residues: D-arabinono-1,4-lactone oxidase (461 aa).

The region spanning 24–194 is the FAD-binding PCMH-type domain; the sequence is FSAISLGLRC…VDITISVVPA (171 aa). Histidine 61 carries the post-translational modification Pros-8alpha-FAD histidine.

It belongs to the oxygen-dependent FAD-linked oxidoreductase family. FAD is required as a cofactor.

It localises to the mitochondrion membrane. It carries out the reaction D-arabinono-1,4-lactone + O2 = dehydro-D-arabinono-1,4-lactone + H2O2 + H(+). It participates in cofactor biosynthesis; D-erythroascorbate biosynthesis; dehydro-D-arabinono-1,4-lactone from D-arabinose: step 2/2. This chain is D-arabinono-1,4-lactone oxidase (alo1), found in Schizosaccharomyces pombe (strain 972 / ATCC 24843) (Fission yeast).